The chain runs to 680 residues: MPRYTESEWLTDFIIDALDSGRFWGVGWLDEQKRIFTVPGRNRRERMPEGFDDFYEAFLEERRRHGLPEIPETETGLGCFGRLLRTANRARQERPFTIYKGKMKLNRWIMTPRPYKGCEGCLVYLTQEPAMKNMLKALFGIYPHDDKHREKALRRSLRKKAQREAARKQAAAVATPTTSSAAEVSSRSQSEDTESSDSENELWVGAQGFVGRDMHSLFFEEPEPSGFGSSGQSSSLLAPDSPRPSTSQVQGPLHVHTPTDLCLPTGGLPSPVIFPHETQGLLAPPAGQSQTPFSPEGPVPSHVSGLDDCLPMVDHIEGCLLDLLSDVGQELPDLGDLGELLCETASPQGPMQSEGGEEGSTESVSVLPATHPLESSAPGASVMGSGQELPDLGDLSELLCETASPQGPMQSEGGEEGSTESVSVLPATHPLESSAPGASVMGSSFQASDNVDDFIDCIPPLCRDDRDVEDQEKADQTFYWYGSDMRPKVLTATQSVAAYLSKKQAIYKVGDKLVPLVVEVYYFGEKVKTHFDLTGGIVICSQVPEASPEHICQTVPPYKCLLPRTAHCSVDANRTLEQTLDRFSMGVVAIGTNMGIFLKGLLEYPAYFVGNASRRRIGKCRPLSHRHEIQQAFDVERHNREPEGSRYASLFLGRRPSPEYDWDHYPVILHIYLAPFYHRD.

Positions 7 to 103 (SEWLTDFIID…RPFTIYKGKM (97 aa)) form a DNA-binding region, IRF tryptophan pentad repeat. 4 disordered regions span residues 156–201 (SLRK…SENE), 220–257 (EEPEPSGFGSSGQSSSLLAPDSPRPSTSQVQGPLHVHT), 343–365 (ETASPQGPMQSEGGEEGSTESVS), and 403–423 (ASPQGPMQSEGGEEGSTESVS). A compositionally biased stretch (low complexity) spans 168-188 (KQAAAVATPTTSSAAEVSSRS). Residues 191-200 (EDTESSDSEN) are compositionally biased toward acidic residues. The span at 220-240 (EEPEPSGFGSSGQSSSLLAPD) shows a compositional bias: low complexity.

The protein belongs to the IRF family. As to quaternary structure, interacts with host EIF2AK2/PKR. Interacts with host USP7.

It is found in the host nucleus. The protein localises to the host cytoplasm. DNA-binding transcription factor that plays a role in the modulation of host immune response. Acts by interacting with host EIF2AK2/PKR and inhibiting its activation. In turn, EIF2AK2/PKR substrates including EIF2S1 or histone H2A are not phosphorylated. Inhibits type I interferon signaling by targeting host IRF3 during viral reactivation from latency. Attenuates the transcriptional activity of host FOXO3 via activation of the AKT1 signaling pathway, inhibiting FOXO3-mediated apoptosis. Also suppresses the expression of viral early lytic genes in both newly infected and reactivated infected host cells allowing regulation of viral life cycle by harnessing the interferon pathway. Mechanistically, promotes host PML bodies formation as well as host antiviral restriction factors IFIT1-3 expression leading to inhibition of viral early lytic proteins. Also regulates host TRAF3 and TRAF6 ubiquitination by interacting with USP7 deubiquitinase thereby influencing TRAF3/6-mediated signal transduction. This chain is Viral IRF2-like protein (vIRF-2), found in Human herpesvirus 8 type P (isolate GK18) (HHV-8).